The sequence spans 231 residues: Ribose-5-phosphate isomerase A (231 aa).

Residues 28 to 31 (TGST), 83 to 86 (DGAD), and 96 to 99 (KGGG) contribute to the substrate site. E105 serves as the catalytic Proton acceptor. K123 contacts substrate.

This sequence belongs to the ribose 5-phosphate isomerase family. In terms of assembly, homodimer.

It carries out the reaction aldehydo-D-ribose 5-phosphate = D-ribulose 5-phosphate. It functions in the pathway carbohydrate degradation; pentose phosphate pathway; D-ribose 5-phosphate from D-ribulose 5-phosphate (non-oxidative stage): step 1/1. Catalyzes the reversible conversion of ribose-5-phosphate to ribulose 5-phosphate. The polypeptide is Ribose-5-phosphate isomerase A (Sinorhizobium medicae (strain WSM419) (Ensifer medicae)).